Consider the following 76-residue polypeptide: Omega-conotoxin-like TxMKLT1-0141 (76 aa).

The signal sequence occupies residues 1–22 (MKLTCMMIVAVLFLTAWTFATA). Positions 23–50 (DDSSNGLENLFPKAHHEMKNPEASKLNE) are excised as a propeptide. Intrachain disulfides connect C52-C67, C59-C70, and C66-C75.

Belongs to the conotoxin O1 superfamily. In terms of tissue distribution, expressed by the venom duct.

Its subcellular location is the secreted. In terms of biological role, omega-conotoxins act at presynaptic membranes, they bind and block voltage-gated calcium channels (Cav). This Conus textile (Cloth-of-gold cone) protein is Omega-conotoxin-like TxMKLT1-0141.